The chain runs to 365 residues: Chorismate synthase (365 aa).

NADP(+) is bound at residue R47. FMN contacts are provided by residues 124-126 (RAS), G287, 302-306 (KPTAT), and R328.

This sequence belongs to the chorismate synthase family. Homotetramer. FMNH2 serves as cofactor.

The catalysed reaction is 5-O-(1-carboxyvinyl)-3-phosphoshikimate = chorismate + phosphate. It functions in the pathway metabolic intermediate biosynthesis; chorismate biosynthesis; chorismate from D-erythrose 4-phosphate and phosphoenolpyruvate: step 7/7. Its function is as follows. Catalyzes the anti-1,4-elimination of the C-3 phosphate and the C-6 proR hydrogen from 5-enolpyruvylshikimate-3-phosphate (EPSP) to yield chorismate, which is the branch point compound that serves as the starting substrate for the three terminal pathways of aromatic amino acid biosynthesis. This reaction introduces a second double bond into the aromatic ring system. This is Chorismate synthase from Prochlorococcus marinus (strain MIT 9312).